The following is a 307-amino-acid chain: Oxygen-dependent coproporphyrinogen-III oxidase (307 aa).

S99 is a substrate binding site. A divalent metal cation-binding residues include H103 and H113. The active-site Proton donor is H113. 115 to 117 (NVR) is a substrate binding site. Positions 152 and 182 each coordinate a divalent metal cation. Positions 247 to 282 (YVEFNLVFDRGTLFGLQSGGRTESILMSMPPVANWR) are important for dimerization. Substrate is bound at residue 265–267 (GGR).

It belongs to the aerobic coproporphyrinogen-III oxidase family. Homodimer. Requires a divalent metal cation as cofactor.

The protein resides in the cytoplasm. The catalysed reaction is coproporphyrinogen III + O2 + 2 H(+) = protoporphyrinogen IX + 2 CO2 + 2 H2O. The protein operates within porphyrin-containing compound metabolism; protoporphyrin-IX biosynthesis; protoporphyrinogen-IX from coproporphyrinogen-III (O2 route): step 1/1. Its function is as follows. Involved in the heme biosynthesis. Catalyzes the aerobic oxidative decarboxylation of propionate groups of rings A and B of coproporphyrinogen-III to yield the vinyl groups in protoporphyrinogen-IX. This Burkholderia lata (strain ATCC 17760 / DSM 23089 / LMG 22485 / NCIMB 9086 / R18194 / 383) protein is Oxygen-dependent coproporphyrinogen-III oxidase.